The sequence spans 81 residues: Cytochrome c oxidase subunit 7B2, mitochondrial (81 aa).

Residues 1–25 constitute a mitochondrion transit peptide; that stretch reads MMFPLARNALSSLKIQSILQSMARH. Over 26-33 the chain is Mitochondrial matrix; the sequence is SHVKHSPD. The helical transmembrane segment at 34 to 60 threads the bilayer; that stretch reads FHDKYGNAVLASGTAFCVATWVFTATQ. At 61 to 81 the chain is on the mitochondrial intermembrane side; it reads IGIEWNLSPVGRVTPKEWKHQ.

It belongs to the cytochrome c oxidase VIIb family. As to quaternary structure, component of the cytochrome c oxidase (complex IV, CIV), a multisubunit enzyme composed of 14 subunits. The complex is composed of a catalytic core of 3 subunits MT-CO1, MT-CO2 and MT-CO3, encoded in the mitochondrial DNA, and 11 supernumerary subunits COX4I, COX5A, COX5B, COX6A, COX6B, COX6C, COX7A, COX7B, COX7C, COX8 and NDUFA4, which are encoded in the nuclear genome. The complex exists as a monomer or a dimer and forms supercomplexes (SCs) in the inner mitochondrial membrane with NADH-ubiquinone oxidoreductase (complex I, CI) and ubiquinol-cytochrome c oxidoreductase (cytochrome b-c1 complex, complex III, CIII), resulting in different assemblies (supercomplex SCI(1)III(2)IV(1) and megacomplex MCI(2)III(2)IV(2)).

Its subcellular location is the mitochondrion inner membrane. Its pathway is energy metabolism; oxidative phosphorylation. Component of the cytochrome c oxidase, the last enzyme in the mitochondrial electron transport chain which drives oxidative phosphorylation. The respiratory chain contains 3 multisubunit complexes succinate dehydrogenase (complex II, CII), ubiquinol-cytochrome c oxidoreductase (cytochrome b-c1 complex, complex III, CIII) and cytochrome c oxidase (complex IV, CIV), that cooperate to transfer electrons derived from NADH and succinate to molecular oxygen, creating an electrochemical gradient over the inner membrane that drives transmembrane transport and the ATP synthase. Cytochrome c oxidase is the component of the respiratory chain that catalyzes the reduction of oxygen to water. Electrons originating from reduced cytochrome c in the intermembrane space (IMS) are transferred via the dinuclear copper A center (CU(A)) of subunit 2 and heme A of subunit 1 to the active site in subunit 1, a binuclear center (BNC) formed by heme A3 and copper B (CU(B)). The BNC reduces molecular oxygen to 2 water molecules using 4 electrons from cytochrome c in the IMS and 4 protons from the mitochondrial matrix. The chain is Cytochrome c oxidase subunit 7B2, mitochondrial (COX7B2) from Homo sapiens (Human).